Consider the following 510-residue polypeptide: 2-isopropylmalate synthase (510 aa).

In terms of domain architecture, Pyruvate carboxyltransferase spans 5 to 267 (LVIFDTTLRD…DTRIDTTQIV (263 aa)). Mn(2+)-binding residues include Asp-14, His-202, His-204, and Asn-238. Residues 392 to 510 (RLLSLVAHSE…SSLERTHPQV (119 aa)) form a regulatory domain region.

It belongs to the alpha-IPM synthase/homocitrate synthase family. LeuA type 1 subfamily. Homodimer. Requires Mn(2+) as cofactor.

The protein localises to the cytoplasm. It catalyses the reaction 3-methyl-2-oxobutanoate + acetyl-CoA + H2O = (2S)-2-isopropylmalate + CoA + H(+). It participates in amino-acid biosynthesis; L-leucine biosynthesis; L-leucine from 3-methyl-2-oxobutanoate: step 1/4. Its function is as follows. Catalyzes the condensation of the acetyl group of acetyl-CoA with 3-methyl-2-oxobutanoate (2-ketoisovalerate) to form 3-carboxy-3-hydroxy-4-methylpentanoate (2-isopropylmalate). The polypeptide is 2-isopropylmalate synthase (Nitrosomonas eutropha (strain DSM 101675 / C91 / Nm57)).